A 479-amino-acid chain; its full sequence is 5-hydroxytryptamine receptor 7 (479 aa).

At 1–83 (MMDVNSSGRP…INYGRVEKVV (83 aa)) the chain is on the extracellular side. N-linked (GlcNAc...) asparagine glycans are attached at residues Asn-5 and Asn-66. The helical transmembrane segment at 84 to 108 (IGSILTLITLLTIAGNCLVVISVCF) threads the bilayer. Residues 109–118 (VKKLRQPSNY) lie on the Cytoplasmic side of the membrane. Residues 119–140 (LIVSLALADLSVAVAVMPFVSV) traverse the membrane as a helical segment. Residues 141–152 (TDLIGGKWIFGH) lie on the Extracellular side of the membrane. The helical transmembrane segment at 153 to 178 (FFCNVFIAMDVMCCTASIMTLCVISI) threads the bilayer. A disulfide bond links Cys-155 and Cys-231. Asp-162 contacts serotonin. The Cytoplasmic segment spans residues 179–198 (DRYLGITRPLTYPVRQNGKC). Residues 199–219 (MAKMILSVWLLSASITLPPLF) traverse the membrane as a helical segment. At 220-237 (GWAQNVNDDKVCLISQDF) the chain is on the extracellular side. A helical membrane pass occupies residues 238–260 (GYTIYSTAVAFYIPMSVMLFMYY). Over 261 to 326 (QIYKAARKSA…SIFKREQKAA (66 aa)) the chain is Cytoplasmic. A helical membrane pass occupies residues 327–352 (TTLGIIVGAFTVCWLPFFLLSTARPF). Residues 353–363 (ICGTSCSCIPL) are Extracellular-facing. The helical transmembrane segment at 364–387 (WVERTFLWLGYANSLINPFIYAFF) threads the bilayer. Over 388–479 (NRDLRTTYRS…TVEKKVMIHD (92 aa)) the chain is Cytoplasmic. Cys-401 is lipidated: S-palmitoyl cysteine.

It belongs to the G-protein coupled receptor 1 family. Predominant isoform in spleen, caudate and hippocampus. As to expression, expressed at lower levels. In terms of tissue distribution, minor isoform in terms of expression.

It is found in the cell membrane. G-protein coupled receptor for 5-hydroxytryptamine (serotonin), a biogenic hormone that functions as a neurotransmitter, a hormone and a mitogen. Ligand binding causes a conformation change that triggers signaling via guanine nucleotide-binding proteins (G proteins) and modulates the activity of downstream effectors. HTR7 is coupled to G(s) G alpha proteins and mediates activation of adenylate cyclase activity. This is 5-hydroxytryptamine receptor 7 from Homo sapiens (Human).